The primary structure comprises 337 residues: Fructose-1,6-bisphosphatase class 1 (337 aa).

Mg(2+) contacts are provided by E89, D112, L114, and D115. Residues 115-118 (DGSS), N208, Y241, and K271 contribute to the substrate site. E277 provides a ligand contact to Mg(2+).

It belongs to the FBPase class 1 family. Homotetramer. Mg(2+) is required as a cofactor.

The protein localises to the cytoplasm. It carries out the reaction beta-D-fructose 1,6-bisphosphate + H2O = beta-D-fructose 6-phosphate + phosphate. It participates in carbohydrate biosynthesis; gluconeogenesis. In Psychromonas ingrahamii (strain DSM 17664 / CCUG 51855 / 37), this protein is Fructose-1,6-bisphosphatase class 1.